The sequence spans 284 residues: D-tagatose-1,6-bisphosphate aldolase subunit GatY (284 aa).

D82 acts as the Proton donor in catalysis. Zn(2+)-binding residues include H83 and H180. Dihydroxyacetone phosphate is bound at residue G181. A Zn(2+)-binding site is contributed by H208. Dihydroxyacetone phosphate contacts are provided by residues 209–211 (GAS) and 230–233 (NVAT).

The protein belongs to the class II fructose-bisphosphate aldolase family. TagBP aldolase GatY subfamily. Forms a complex with GatZ. It depends on Zn(2+) as a cofactor.

The enzyme catalyses D-tagatofuranose 1,6-bisphosphate = D-glyceraldehyde 3-phosphate + dihydroxyacetone phosphate. The protein operates within carbohydrate metabolism; D-tagatose 6-phosphate degradation; D-glyceraldehyde 3-phosphate and glycerone phosphate from D-tagatose 6-phosphate: step 2/2. Functionally, catalytic subunit of the tagatose-1,6-bisphosphate aldolase GatYZ, which catalyzes the reversible aldol condensation of dihydroxyacetone phosphate (DHAP or glycerone-phosphate) with glyceraldehyde 3-phosphate (G3P) to produce tagatose 1,6-bisphosphate (TBP). Requires GatZ subunit for full activity and stability. Is involved in the catabolism of galactitol. This chain is D-tagatose-1,6-bisphosphate aldolase subunit GatY, found in Escherichia coli O45:K1 (strain S88 / ExPEC).